A 78-amino-acid polypeptide reads, in one-letter code: Rubredoxin (78 aa).

In terms of domain architecture, Rubredoxin-like spans 23-74 (DARLECKICWWEYDPEVGDPVWQIAPGTSFSALPAHWRCPNCDGEAEQFMVL). Fe cation contacts are provided by cysteine 28, cysteine 31, cysteine 61, and cysteine 64.

This sequence belongs to the rubredoxin family. Requires Fe(3+) as cofactor.

Functionally, rubredoxin is a small nonheme, iron protein lacking acid-labile sulfide. Its single Fe, chelated to 4 Cys, functions as an electron acceptor and may also stabilize the conformation of the molecule. Could be involved in hydrogenase-linked redox processes. The polypeptide is Rubredoxin (hoxR) (Cupriavidus necator (strain ATCC 17699 / DSM 428 / KCTC 22496 / NCIMB 10442 / H16 / Stanier 337) (Ralstonia eutropha)).